The primary structure comprises 273 residues: Large ribosomal subunit protein uL2c (273 aa).

Polar residues predominate over residues 1–31 (MAIHLSKTSSPSTRNGAVNSQVKSNSRNRLI). 2 disordered regions span residues 1–53 (MAIH…GHRG) and 222–273 (MNPV…RRSK).

This sequence belongs to the universal ribosomal protein uL2 family. In terms of assembly, part of the 50S ribosomal subunit.

It is found in the plastid. The protein localises to the chloroplast. This chain is Large ribosomal subunit protein uL2c (rpl2), found in Pisum sativum (Garden pea).